We begin with the raw amino-acid sequence, 190 residues long: MDKTAKYIQKKTKCEFIQQGDGTIVIYSTLDNIEDHLLFLRDDEKCRFELLVDIFGVDYPDREKRFELIYNLLSIVHNIRVHIKLQLYEDDMPPSVVRIFNTASWFEREVFDMYGIEFSNHPDLRRILTDYGFKGHPMLKDFPLTGYEEVRYDIEAKKVVYNPIDLPQDFRMFDSLSPWEGETAKANTKE.

It belongs to the complex I 30 kDa subunit family. As to quaternary structure, NDH-1 is composed of 14 different subunits. Subunits NuoB, C, D, E, F, and G constitute the peripheral sector of the complex.

The protein resides in the cell membrane. The catalysed reaction is a quinone + NADH + 5 H(+)(in) = a quinol + NAD(+) + 4 H(+)(out). Functionally, NDH-1 shuttles electrons from NADH, via FMN and iron-sulfur (Fe-S) centers, to quinones in the respiratory chain. The immediate electron acceptor for the enzyme in this species is believed to be ubiquinone. Couples the redox reaction to proton translocation (for every two electrons transferred, four hydrogen ions are translocated across the cytoplasmic membrane), and thus conserves the redox energy in a proton gradient. The protein is NADH-quinone oxidoreductase subunit C of Wolbachia sp. subsp. Brugia malayi (strain TRS).